An 841-amino-acid polypeptide reads, in one-letter code: Translation initiation factor IF-2 (841 aa).

5 stretches are compositionally biased toward basic and acidic residues: residues 1 to 12 (MSDNEIKNEAPK), 52 to 92 (ALKA…EATK), 114 to 170 (EQPK…REEA), 188 to 202 (READRDNDRRSEANR), and 213 to 235 (KKGDREDKNERNADRRNQKDVKG). 2 disordered regions span residues 1–24 (MSDNEIKNEAPKKLSLQRRTKTTV) and 52–246 (ALKA…GSAL). The region spanning 340 to 510 (TRAPVVTIMG…LLQSEVLELT (171 aa)) is the tr-type G domain. Residues 349-356 (GHVDHGKT) form a G1 region. 349-356 (GHVDHGKT) lines the GTP pocket. The interval 374-378 (GITQH) is G2. The segment at 396 to 399 (DTPG) is G3. GTP contacts are provided by residues 396–400 (DTPGH) and 450–453 (NKID). The segment at 450–453 (NKID) is G4. The interval 486–488 (SAK) is G5.

This sequence belongs to the TRAFAC class translation factor GTPase superfamily. Classic translation factor GTPase family. IF-2 subfamily.

Its subcellular location is the cytoplasm. Functionally, one of the essential components for the initiation of protein synthesis. Protects formylmethionyl-tRNA from spontaneous hydrolysis and promotes its binding to the 30S ribosomal subunits. Also involved in the hydrolysis of GTP during the formation of the 70S ribosomal complex. The protein is Translation initiation factor IF-2 of Actinobacillus pleuropneumoniae serotype 5b (strain L20).